The primary structure comprises 1499 residues: B-cell CLL/lymphoma 9-like protein (1499 aa).

Disordered regions lie at residues 1–238 (MRIL…PPSQ) and 271–500 (VPRA…MGQQ). Over residues 20–37 (GSPPLSPRGHCPPAPAKP) the composition is skewed to pro residues. Residues S21 and S25 each carry the phosphoserine modification. K36 carries the N6-acetyllysine modification. Polar residues-rich tracts occupy residues 45-70 (TNHG…TCNV) and 85-96 (NQISPSNSSLKN). S88 is subject to Phosphoserine. K108 and K110 each carry N6-acetyllysine. 2 stretches are compositionally biased toward basic and acidic residues: residues 114–126 (DRSV…EQRE) and 134–153 (SEAK…ERKQ). A phosphoserine mark is found at S116 and S118. K137 carries the N6-acetyllysine modification. Positions 193-205 (PGQTTQLPLSESS) are enriched in polar residues. Residues 222-232 (PGGGGGGGGVP) show a composition bias toward gly residues. Pro residues-rich tracts occupy residues 281 to 291 (KVPPTPEPLPL) and 301 to 325 (SQPP…PPEG). The interval 304-533 (PPLPPPPPPA…QEEYYEEKRR (230 aa)) is necessary for interaction with CTNNB1. 2 stretches are compositionally biased toward low complexity: residues 351–363 (THPN…TANN) and 370–387 (DPSS…AAPG). Basic and acidic residues predominate over residues 399-421 (LSKEQLEHRERSLQTLRDIERLL). Residue S424 is modified to Phosphoserine. Over residues 445 to 458 (AQAPPPPQQPPTAP) the composition is skewed to pro residues. A Phosphothreonine modification is found at T514. An Asymmetric dimethylarginine modification is found at R680. Phosphoserine is present on residues S750, S813, S915, S926, S938, S942, S947, S975, S987, S991, S997, S1004, S1010, and S1017. 2 disordered regions span residues 888 to 1084 (SHMP…QNPL) and 1116 to 1201 (ELLP…PQNS). A compositionally biased stretch (polar residues) spans 935 to 960 (PTLSQVHSPLVTSPSANLKSPQTPSQ). Positions 978–996 (VLGSSLSVRSPTGSPSRLK) are enriched in polar residues. Polar residues-rich tracts occupy residues 1019–1041 (GVSQ…NMEQ) and 1069–1084 (LPFT…QNPL). Composition is skewed to pro residues over residues 1122–1132 (PLLPPPPPPQG) and 1168–1179 (HEPPPAMLPSPT). K1344 is covalently cross-linked (Glycyl lysine isopeptide (Lys-Gly) (interchain with G-Cter in SUMO2)).

The protein belongs to the BCL9 family. In terms of assembly, found in a complex with CDC73; CTNNB1 and PYGO1. Interacts with CTNNB1. Expressed in breast, ductal and invasive ductal carcinomas of the breast, sporadic colorectal adenomas and carcinomas (at protein level). Expressed in fetal brain. Expressed in lung, amygdala, eye, prostate, pancreatic and prostate cancers, head and neck tumors and embryonal tumor.

It localises to the nucleus. Functionally, transcriptional regulator that acts as an activator. Promotes beta-catenin transcriptional activity. Plays a role in tumorigenesis. Enhances the neoplastic transforming activity of CTNNB1. This chain is B-cell CLL/lymphoma 9-like protein (BCL9L), found in Homo sapiens (Human).